A 152-amino-acid polypeptide reads, in one-letter code: Clitocypin-4/-3 (152 aa).

Belongs to the protease inhibitor I48 family. As to quaternary structure, homodimer.

Its function is as follows. Binds and inhibits cysteine proteinases. Inhibits most strongly papain and cathepsin L, more weakly bromelain and cathepsin B while it is completely ineffective against cathepsin H. This chain is Clitocypin-4/-3 (clt4), found in Clitocybe nebularis (Clouded agaric).